Reading from the N-terminus, the 245-residue chain is 14-3-3 protein zeta (245 aa).

The protein belongs to the 14-3-3 family. Homodimer.

It localises to the cytoplasm. Adapter protein implicated in the regulation of a large spectrum of both general and specialized signaling pathways. Binds to a large number of partners, usually by recognition of a phosphoserine or phosphothreonine motif. Binding generally results in the modulation of the activity of the binding partner. The sequence is that of 14-3-3 protein zeta (ywhaz) from Xenopus tropicalis (Western clawed frog).